Here is a 216-residue protein sequence, read N- to C-terminus: Elongation factor 1-beta (216 aa).

It belongs to the EF-1-beta/EF-1-delta family. EF-1 is composed of 4 subunits: alpha, beta, delta, and gamma. Interacts with actin.

It is found in the cytoplasm. Its function is as follows. EF-1-beta and EF-1-delta stimulate the exchange of GDP bound to EF-1-alpha to GTP. The chain is Elongation factor 1-beta (efa1B) from Dictyostelium discoideum (Social amoeba).